The sequence spans 1624 residues: Reverse gyrase (1624 aa).

The segment at 1–42 adopts an RG N-terminal-type zinc-finger fold; that stretch reads MKAIYRGMCPNCRGAITDERLSNKNPCEGCLSEPILSEDYNE. Residues Cys-9, Cys-12, Cys-27, and Cys-30 each coordinate Zn(2+). ATP-binding positions include Gln-89 and 106-113; that span reads APTGMGKS. A Helicase ATP-binding domain is found at 93–256; the sequence is VKRIIRGKSF…KLKKQLAKLL (164 aa). A DEAD box motif is present at residues 213–216; it reads DDVD. The segment at 636 to 1624 is topoisomerase I; it reads DLVKSALMIV…LYEEIKRYVR (989 aa). Residues 640–803 form the Toprim domain; the sequence is SALMIVESPN…NIKRIEFHEV (164 aa). Glu-646 contacts Mg(2+). The segment at 720–749 adopts an RG C-terminal-type zinc-finger fold; sequence IKRCRDCGHQFVDWEQKGVCPRCGSRNVHD. Residues Cys-723, Cys-726, Cys-739, and Cys-742 each contribute to the Zn(2+) site. Residue Asp-772 participates in Mg(2+) binding. The 805-residue stretch at 819 to 1623 folds into the Topo IA-type catalytic domain; it reads NEDRVNAQLV…ELYEEIKRYV (805 aa). The DOD-type homing endonuclease domain maps to 1107 to 1222; it reads IFGVILGKGT…LSVYLYQIGI (116 aa). Tyr-1366 functions as the O-(5'-phospho-DNA)-tyrosine intermediate in the catalytic mechanism.

This sequence in the N-terminal section; belongs to the DEAD box helicase family. DDVD subfamily. The protein in the C-terminal section; belongs to the type IA topoisomerase family. Monomer. Zn(2+) is required as a cofactor. Requires Mg(2+) as cofactor. Post-translationally, this protein undergoes a protein self splicing that involves a post-translational excision of the intervening region (intein) followed by peptide ligation.

The protein localises to the cytoplasm. It catalyses the reaction ATP + H2O = ADP + phosphate + H(+). Its function is as follows. Modifies the topological state of DNA by introducing positive supercoils in an ATP-dependent process, increasing the linking number in steps of +1. Binds to single-stranded DNA, transiently cleaves and then rejoins the ends, introducing a positive supercoil in the process. The scissile phosphodiester is attacked by the catalytic tyrosine of the enzyme, resulting in the formation of a DNA-(5'-phosphotyrosyl)-enzyme intermediate. Probably involved in rewinding DNA strands in regions of the chromosome that have opened up to allow replication, transcription, DNA repair and/or for DNA protection. This chain is Reverse gyrase, found in Pyrococcus horikoshii (strain ATCC 700860 / DSM 12428 / JCM 9974 / NBRC 100139 / OT-3).